Reading from the N-terminus, the 1214-residue chain is Myosin-1 (1214 aa).

Positions 1–21 (MAIIKRGARNKTAQEPAKRSA) are disordered. One can recognise a Myosin motor domain in the interval 36-715 (VGVSDLTLLS…TLFALEHMRD (680 aa)). 129-136 (GESGAGKT) contacts ATP. S357 carries the phosphoserine modification. The segment at 404–486 (SIGILDIYGF…PGIFAAMNDS (83 aa)) is actin-binding. IQ domains follow at residues 719–739 (YNMAARIQRAWRRFLQRRIDS) and 740–765 (ATRIQRAIREKKGGNKYEKLRDEGSK). One can recognise a TH1 domain in the interval 771–961 (KERRTMSLLG…TILVRRGHPA (191 aa)). Disordered regions lie at residues 926–1090 (KPGK…SELP), 1129–1177 (HQGG…AAAQ), and 1193–1214 (NKMRVESDGEDNGNDDDDDDDW). The segment covering 965–980 (QKKKPKKGKGHSKHHS) has biased composition (basic residues). Low complexity-rich tracts occupy residues 981–1000 (TSTSAPRSSVQSSQPSAPVS) and 1037–1057 (AAQPQATPQPAQVTQPQQKKV). Positions 1058–1067 (APPPPPPPPM) are enriched in pro residues. The SH3 domain occupies 1069–1131 (SSEPKYEAAY…PTNYVVKHQG (63 aa)). The segment covering 1157-1177 (VSSSQSETATTATPASVAAAQ) has biased composition (low complexity). A compositionally biased stretch (acidic residues) spans 1200–1214 (DGEDNGNDDDDDDDW).

This sequence belongs to the TRAFAC class myosin-kinesin ATPase superfamily. Myosin family. Post-translationally, phosphorylation of the TEDS site (Ser-357) is required for the polarization of the actin cytoskeleton. Phosphorylation probably activates the myosin-I ATPase activity.

Its subcellular location is the cytoplasm. It is found in the cytoskeleton. It localises to the actin patch. In terms of biological role, type-I myosin implicated in the organization of the actin cytoskeleton. Required for proper actin cytoskeleton polarization. At the cell cortex, assembles in patch-like structures together with proteins from the actin-polymerizing machinery and promotes actin assembly. Functions as actin nucleation-promoting factor (NPF) for the Arp2/3 complex. The chain is Myosin-1 (MYO1) from Vanderwaltozyma polyspora (strain ATCC 22028 / DSM 70294 / BCRC 21397 / CBS 2163 / NBRC 10782 / NRRL Y-8283 / UCD 57-17) (Kluyveromyces polysporus).